Here is a 293-residue protein sequence, read N- to C-terminus: Small ribosomal subunit protein uS3 (293 aa).

A KH type-2 domain is found at 39–107; sequence VREYLKAKLK…PVAVNIEEVR (69 aa). The tract at residues 210–293 is disordered; sequence RNDLPAVETP…PATAADGKGE (84 aa). The span at 219-238 shows a compositional bias: basic and acidic residues; it reads PRPEEERRPRGPRRDGRPGG.

It belongs to the universal ribosomal protein uS3 family. Part of the 30S ribosomal subunit. Forms a tight complex with proteins S10 and S14.

Binds the lower part of the 30S subunit head. Binds mRNA in the 70S ribosome, positioning it for translation. This is Small ribosomal subunit protein uS3 from Paracidovorax citrulli (strain AAC00-1) (Acidovorax citrulli).